Reading from the N-terminus, the 126-residue chain is MQCTMLKAKLHQARVTHAELEYEGSCAIDGDLMDMAGILEYEQIQIYNIDNGERFETYAIRGEAGSKIISVNGAAAHKAQPGDRVIICAYANYTSAELINFKPSLIYMAEGNEVKGTSNAIPVQVA.

Ser-25 (schiff-base intermediate with substrate; via pyruvic acid) is an active-site residue. Ser-25 bears the Pyruvic acid (Ser) mark. Thr-57 lines the substrate pocket. The Proton donor role is filled by Tyr-58. Position 73 to 75 (73 to 75) interacts with substrate; the sequence is GAA.

Belongs to the PanD family. In terms of assembly, heterooctamer of four alpha and four beta subunits. Pyruvate is required as a cofactor. Is synthesized initially as an inactive proenzyme, which is activated by self-cleavage at a specific serine bond to produce a beta-subunit with a hydroxyl group at its C-terminus and an alpha-subunit with a pyruvoyl group at its N-terminus.

The protein resides in the cytoplasm. It catalyses the reaction L-aspartate + H(+) = beta-alanine + CO2. Its pathway is cofactor biosynthesis; (R)-pantothenate biosynthesis; beta-alanine from L-aspartate: step 1/1. Functionally, catalyzes the pyruvoyl-dependent decarboxylation of aspartate to produce beta-alanine. The polypeptide is Aspartate 1-decarboxylase (Alcanivorax borkumensis (strain ATCC 700651 / DSM 11573 / NCIMB 13689 / SK2)).